The sequence spans 269 residues: Aquaporin-1 (269 aa).

Residues 1–11 (MASEFKKKLFW) are Cytoplasmic-facing. The helical transmembrane segment at 12–29 (RAVVAEFLAMTLFVFISI) threads the bilayer. Over 30-46 (GSALGFKYPVGNNQTAV) the chain is Extracellular. N-linked (GlcNAc...) asparagine glycosylation occurs at Asn42. The helical transmembrane segment at 47-65 (QDNVKVSLAFGLSIATLAQ) threads the bilayer. Over 66–68 (SVG) the chain is Cytoplasmic. Residues 69–82 (HISGAHLNPAVTLG) lie within the membrane without spanning it. Residues 76–78 (NPA) carry the NPA 1 motif. The Cytoplasmic segment spans residues 83–90 (LLLSCQIS). Residues 91–109 (IFRALMYIIAQCVGAIVAT) traverse the membrane as a helical segment. The Extracellular portion of the chain corresponds to 110–133 (AILSGITSSLPGNSLGRNDLADGV). Residues 134-153 (NSGQGLGIEIIGTLQLVLCV) form a helical membrane-spanning segment. Over 154–163 (LATTDRRRRD) the chain is Cytoplasmic. Residues 164–181 (LGGSAPLAIGLSVALGHL) form a helical membrane-spanning segment. The Extracellular segment spans residues 182–186 (LAIDY). An intramembrane segment occupies 187–199 (TGCGINPARSFGS). The NPA 2 signature appears at 192 to 194 (NPA). Topologically, residues 200–206 (AVITHNF) are extracellular. The N-linked (GlcNAc...) asparagine glycan is linked to Asn205. The chain crosses the membrane as a helical span at residues 207–224 (SNHWIFWVGPFIGGALAV). At 225–269 (LIYDFILAPRSSDFTDRVKVWTSGQVEEYDLDADDINSRVEMKPK) the chain is on the cytoplasmic side. Ser247 bears the Phosphoserine mark. At Tyr253 the chain carries Phosphotyrosine. Position 262 is a phosphoserine (Ser262).

Belongs to the MIP/aquaporin (TC 1.A.8) family. In terms of assembly, homotetramer; each monomer provides an independent water pore. Component of the ankyrin-1 complex in the erythrocyte, composed of ANK1, RHCE, RHAG, SLC4A1, EPB42, GYPA, GYPB and AQP1. Interacts with EPHB2; involved in endolymph production in the inner ear. Identified in a complex with STOM. Interacts (via the N-terminal) with ANK1 (via ANK 1-5 repeats). Interacts (via the C-terminal) with EPB42.

The protein localises to the cell membrane. The catalysed reaction is H2O(in) = H2O(out). It catalyses the reaction nitric oxide(out) = nitric oxide(in). It carries out the reaction CO2(out) = CO2(in). The enzyme catalyses glycerol(in) = glycerol(out). The catalysed reaction is H2O2(out) = H2O2(in). It catalyses the reaction K(+)(in) = K(+)(out). It carries out the reaction Na(+)(in) = Na(+)(out). Its function is as follows. Forms a water channel that facilitates the transport of water across cell membranes, playing a crucial role in water homeostasis in various tissues. Could also be permeable to small solutes including hydrogen peroxide, glycerol and gases such as amonnia (NH3), nitric oxide (NO) and carbon dioxide (CO2). Recruited to the ankyrin-1 complex, a multiprotein complex of the erythrocyte membrane, it could be part of a CO2 metabolon, linking facilitated diffusion of CO2 across the membrane, anion exchange of Cl(-)/HCO3(-) and interconversion of dissolved CO2 and carbonic acid in the cytosol. In vitro, it shows non-selective gated cation channel activity and may be permeable to cations like K(+) and Na(+) in vivo. The polypeptide is Aquaporin-1 (Pongo abelii (Sumatran orangutan)).